Here is a 349-residue protein sequence, read N- to C-terminus: Probable dual-specificity RNA methyltransferase RlmN (349 aa).

Glu-94 (proton acceptor) is an active-site residue. In terms of domain architecture, Radical SAM core spans 100 to 321; that stretch reads DEDRATLCVS…TQHGVFATIR (222 aa). Cys-107 and Cys-332 form a disulfide bridge. Residues Cys-114, Cys-118, and Cys-121 each coordinate [4Fe-4S] cluster. Residues 159-160, Ser-191, 213-215, and His-289 each bind S-adenosyl-L-methionine; these read GE and SMH. Cys-332 functions as the S-methylcysteine intermediate in the catalytic mechanism.

This sequence belongs to the radical SAM superfamily. RlmN family. Requires [4Fe-4S] cluster as cofactor.

The protein localises to the cytoplasm. It catalyses the reaction adenosine(2503) in 23S rRNA + 2 reduced [2Fe-2S]-[ferredoxin] + 2 S-adenosyl-L-methionine = 2-methyladenosine(2503) in 23S rRNA + 5'-deoxyadenosine + L-methionine + 2 oxidized [2Fe-2S]-[ferredoxin] + S-adenosyl-L-homocysteine. The catalysed reaction is adenosine(37) in tRNA + 2 reduced [2Fe-2S]-[ferredoxin] + 2 S-adenosyl-L-methionine = 2-methyladenosine(37) in tRNA + 5'-deoxyadenosine + L-methionine + 2 oxidized [2Fe-2S]-[ferredoxin] + S-adenosyl-L-homocysteine. In terms of biological role, specifically methylates position 2 of adenine 2503 in 23S rRNA and position 2 of adenine 37 in tRNAs. The polypeptide is Probable dual-specificity RNA methyltransferase RlmN (Phocaeicola vulgatus (strain ATCC 8482 / DSM 1447 / JCM 5826 / CCUG 4940 / NBRC 14291 / NCTC 11154) (Bacteroides vulgatus)).